The following is a 64-amino-acid chain: Potassium channel toxin kappa-KTx 4.1 (64 aa).

The N-terminal stretch at 1–26 is a signal peptide; the sequence is MKSTLMTASLLILVVLFIIDYASVYA. The propeptide occupies 27–38; that stretch reads EFIDGEISLERE. 2 disulfides stabilise this stretch: Cys-43–Cys-61 and Cys-47–Cys-57.

The protein belongs to the short scorpion toxin superfamily. Potassium channel inhibitor kappa-KTx family. Kappa-KTx 4 subfamily. As to expression, expressed by the venom gland.

It localises to the secreted. In terms of biological role, potassium channel inhibitor (Kv). The chain is Potassium channel toxin kappa-KTx 4.1 from Heterometrus petersii (Asian forest scorpion).